The primary structure comprises 554 residues: Intraflagellar transport protein 56 (554 aa).

The segment at 1–27 (MMLSRAKPAVGGESPHTDKRKKKGRKI) is disordered. Positions 18-27 (DKRKKKGRKI) are enriched in basic residues. 4 TPR repeats span residues 57–90 (DDTN…ENCN), 92–125 (EVWV…LQNR), 151–184 (KEDQ…NREY), and 468–501 (ANDC…EGKR).

It belongs to the IFT56 family. In terms of assembly, component of the IFT complex B. Interacts with IFT46; the interaction is direct. High expression detected in testis. Detected also retina, kidney, lung and brain tissue. The expression level is low in spleen. Expressed in the developing liver. Present in the airway epithelial cells and the testes (at protein level).

It localises to the cell projection. Its subcellular location is the cilium. Component of the intraflagellar transport (IFT) complex B required for transport of proteins in the motile cilium. Required for transport of specific ciliary cargo proteins related to motility, while it is neither required for IFT complex B assembly or motion nor for cilium assembly. Required for efficient coupling between the accumulation of GLI2 and GLI3 at the ciliary tips and their dissociation from the negative regulator SUFU. Plays a key role in maintaining the integrity of the IFT complex B and the proper ciliary localization of the IFT complex B components. Not required for IFT complex A ciliary localization or function. Essential for maintaining proper microtubule organization within the ciliary axoneme. The chain is Intraflagellar transport protein 56 from Mus musculus (Mouse).